The chain runs to 203 residues: ATP-dependent Clp protease proteolytic subunit (203 aa).

The active-site Nucleophile is Ser-101. Residue His-126 is part of the active site.

Belongs to the peptidase S14 family. Component of the chloroplastic Clp protease core complex.

The protein localises to the plastid. It localises to the chloroplast stroma. The catalysed reaction is Hydrolysis of proteins to small peptides in the presence of ATP and magnesium. alpha-casein is the usual test substrate. In the absence of ATP, only oligopeptides shorter than five residues are hydrolyzed (such as succinyl-Leu-Tyr-|-NHMec, and Leu-Tyr-Leu-|-Tyr-Trp, in which cleavage of the -Tyr-|-Leu- and -Tyr-|-Trp bonds also occurs).. Functionally, cleaves peptides in various proteins in a process that requires ATP hydrolysis. Has a chymotrypsin-like activity. Plays a major role in the degradation of misfolded proteins. The chain is ATP-dependent Clp protease proteolytic subunit from Marchantia polymorpha (Common liverwort).